We begin with the raw amino-acid sequence, 568 residues long: uncharacterized protein (568 aa).

This is an uncharacterized protein from Rickettsia prowazekii (strain Madrid E).